The sequence spans 202 residues: Inosine triphosphate pyrophosphatase (202 aa).

8 to 13 is an ITP binding site; sequence TGNANK. Position 55 (glutamate 55) interacts with Mg(2+). ITP contacts are provided by residues lysine 67, 83 to 84, lysine 100, 159 to 162, lysine 182, and 187 to 188; these read DT, FGWD, and HR.

Belongs to the HAM1 NTPase family. In terms of assembly, homodimer. Requires Mg(2+) as cofactor. Mn(2+) is required as a cofactor.

The protein localises to the cytoplasm. It localises to the nucleus. The enzyme catalyses ITP + H2O = IMP + diphosphate + H(+). It catalyses the reaction dITP + H2O = dIMP + diphosphate + H(+). The catalysed reaction is XTP + H2O = XMP + diphosphate + H(+). In terms of biological role, pyrophosphatase that hydrolyzes non-canonical purine nucleotides such as inosine triphosphate (ITP), deoxyinosine triphosphate (dITP) or xanthosine 5'-triphosphate (XTP) to their respective monophosphate derivatives. The enzyme does not distinguish between the deoxy- and ribose forms. Probably excludes non-canonical purines from RNA and DNA precursor pools, thus preventing their incorporation into RNA and DNA and avoiding chromosomal lesions. The polypeptide is Inosine triphosphate pyrophosphatase (Candida albicans (strain SC5314 / ATCC MYA-2876) (Yeast)).